The primary structure comprises 278 residues: tRNA uridine(34) hydroxylase (278 aa).

The Rhodanese domain maps to 122–216 (QDPDVVVIDT…YLETIAPEES (95 aa)). Cys176 (cysteine persulfide intermediate) is an active-site residue.

The protein belongs to the TrhO family.

The catalysed reaction is uridine(34) in tRNA + AH2 + O2 = 5-hydroxyuridine(34) in tRNA + A + H2O. Functionally, catalyzes oxygen-dependent 5-hydroxyuridine (ho5U) modification at position 34 in tRNAs. This Synechocystis sp. (strain ATCC 27184 / PCC 6803 / Kazusa) protein is tRNA uridine(34) hydroxylase.